A 166-amino-acid polypeptide reads, in one-letter code: 2-C-methyl-D-erythritol 2,4-cyclodiphosphate synthase (166 aa).

A divalent metal cation contacts are provided by Asp12 and His14. 4-CDP-2-C-methyl-D-erythritol 2-phosphate is bound by residues 12-14 (DSH) and 38-39 (HS). Residue His46 coordinates a divalent metal cation. 4-CDP-2-C-methyl-D-erythritol 2-phosphate contacts are provided by residues 60-62 (DIG), 65-69 (FPDTD), and Arg146.

The protein belongs to the IspF family. In terms of assembly, homotrimer. Requires a divalent metal cation as cofactor.

It carries out the reaction 4-CDP-2-C-methyl-D-erythritol 2-phosphate = 2-C-methyl-D-erythritol 2,4-cyclic diphosphate + CMP. It functions in the pathway isoprenoid biosynthesis; isopentenyl diphosphate biosynthesis via DXP pathway; isopentenyl diphosphate from 1-deoxy-D-xylulose 5-phosphate: step 4/6. Functionally, involved in the biosynthesis of isopentenyl diphosphate (IPP) and dimethylallyl diphosphate (DMAPP), two major building blocks of isoprenoid compounds. Catalyzes the conversion of 4-diphosphocytidyl-2-C-methyl-D-erythritol 2-phosphate (CDP-ME2P) to 2-C-methyl-D-erythritol 2,4-cyclodiphosphate (ME-CPP) with a corresponding release of cytidine 5-monophosphate (CMP). The protein is 2-C-methyl-D-erythritol 2,4-cyclodiphosphate synthase of Gemmatimonas aurantiaca (strain DSM 14586 / JCM 11422 / NBRC 100505 / T-27).